The primary structure comprises 55 residues: Large ribosomal subunit protein bL33 (55 aa).

Belongs to the bacterial ribosomal protein bL33 family.

This is Large ribosomal subunit protein bL33 from Methylacidiphilum infernorum (isolate V4) (Methylokorus infernorum (strain V4)).